A 208-amino-acid chain; its full sequence is Thiamine-phosphate synthase (208 aa).

4-amino-2-methyl-5-(diphosphooxymethyl)pyrimidine-binding positions include 37 to 39 (QVR) and N70. D71 and D90 together coordinate Mg(2+). Residue T109 coordinates 4-amino-2-methyl-5-(diphosphooxymethyl)pyrimidine. 135 to 137 (TTS) provides a ligand contact to 2-[(2R,5Z)-2-carboxy-4-methylthiazol-5(2H)-ylidene]ethyl phosphate. K138 is a 4-amino-2-methyl-5-(diphosphooxymethyl)pyrimidine binding site. G166 provides a ligand contact to 2-[(2R,5Z)-2-carboxy-4-methylthiazol-5(2H)-ylidene]ethyl phosphate.

The protein belongs to the thiamine-phosphate synthase family. It depends on Mg(2+) as a cofactor.

It carries out the reaction 2-[(2R,5Z)-2-carboxy-4-methylthiazol-5(2H)-ylidene]ethyl phosphate + 4-amino-2-methyl-5-(diphosphooxymethyl)pyrimidine + 2 H(+) = thiamine phosphate + CO2 + diphosphate. It catalyses the reaction 2-(2-carboxy-4-methylthiazol-5-yl)ethyl phosphate + 4-amino-2-methyl-5-(diphosphooxymethyl)pyrimidine + 2 H(+) = thiamine phosphate + CO2 + diphosphate. The enzyme catalyses 4-methyl-5-(2-phosphooxyethyl)-thiazole + 4-amino-2-methyl-5-(diphosphooxymethyl)pyrimidine + H(+) = thiamine phosphate + diphosphate. Its pathway is cofactor biosynthesis; thiamine diphosphate biosynthesis; thiamine phosphate from 4-amino-2-methyl-5-diphosphomethylpyrimidine and 4-methyl-5-(2-phosphoethyl)-thiazole: step 1/1. In terms of biological role, condenses 4-methyl-5-(beta-hydroxyethyl)thiazole monophosphate (THZ-P) and 2-methyl-4-amino-5-hydroxymethyl pyrimidine pyrophosphate (HMP-PP) to form thiamine monophosphate (TMP). This Salinispora arenicola (strain CNS-205) protein is Thiamine-phosphate synthase.